Reading from the N-terminus, the 207-residue chain is Small ribosomal subunit protein uS10m (207 aa).

Residues 1-14 (MNMFRQAVRSFVRY) constitute a mitochondrion transit peptide.

This sequence belongs to the universal ribosomal protein uS10 family. In terms of assembly, part of the mitochondrial small ribosomal subunit.

Its subcellular location is the mitochondrion. Functionally, involved in mitochondrial genome encoded proteins translation. Involved in the binding of tRNA to the ribosomes. In Kluyveromyces lactis (strain ATCC 8585 / CBS 2359 / DSM 70799 / NBRC 1267 / NRRL Y-1140 / WM37) (Yeast), this protein is Small ribosomal subunit protein uS10m (RSM10).